A 329-amino-acid chain; its full sequence is MACVLAIGSILFVWILGKGKYSGAQLIYRMATNFAISQGCCLVTCACELTEEIKHLHTRYNGHYWRALKASFNLSCAAFVTAILCYVFYEPKLMASLPLTIDITLTLLSWLFCWILGIQGPTPATISEITEIKQLNVAHGLAWSYYVGYLQFVLPALKESIQKFNEENHNLLKFPETCRLHILIPLSCRLYGDLKDVDENITFLKEIPPLYIDRAGIKGRVFKNNVYRILDEDGRPYNCIVEYATPLASLLKMTDIPSAAFSADDRLQQTKLFYRTLKDILENAHELQNTYRLIVYEDFPETKDHSRHLLSQEILKHIRQQHSEEYSML.

At 1-4 (MACV) the chain is on the cytoplasmic side. The chain crosses the membrane as a helical span at residues 5–25 (LAIGSILFVWILGKGKYSGAQ). Residue Leu-26 is a topological domain, lumenal. Residues 27 to 52 (IYRMATNFAISQGCCLVTCACELTEE) traverse the membrane as a helical segment. The Cytoplasmic portion of the chain corresponds to 53 to 74 (IKHLHTRYNGHYWRALKASFNL). Residues 75 to 88 (SCAAFVTAILCYVF) form a helical membrane-spanning segment. Residues 89–98 (YEPKLMASLP) are Lumenal-facing. The chain crosses the membrane as a helical span at residues 99 to 116 (LTIDITLTLLSWLFCWIL). The Cytoplasmic segment spans residues 117 to 329 (GIQGPTPATI…QQHSEEYSML (213 aa)). Residues 135–325 (LNVAHGLAWS…KHIRQQHSEE (191 aa)) are cyclic dinucleotide-binding domain (CBD). 2',3'-cGAMP contacts are provided by Ser-144, Tyr-149, Arg-220, and Thr-245. 3',3'-c-di-GMP is bound by residues Ser-144, Tyr-149, 220 to 223 (RVFK), and Thr-245.

The protein belongs to the STING family. In terms of assembly, homodimer; forms a homodimer in absence of cyclic nucleotide (c-di-GMP or cGAMP). Homotetramer; in presence of cyclic nucleotide (c-di-GMP or cGAMP), forms tetramers and higher-order oligomers through side-by-side packing.

It is found in the endoplasmic reticulum membrane. Its subcellular location is the cytoplasm. It localises to the perinuclear region. The protein localises to the endoplasmic reticulum-Golgi intermediate compartment membrane. The protein resides in the golgi apparatus membrane. It is found in the cytoplasmic vesicle. Its subcellular location is the autophagosome membrane. The catalysed reaction is H(+)(in) = H(+)(out). In terms of biological role, sensor of cytosolic DNA from bacteria and viruses that promotes autophagy. Acts by recognizing and binding cyclic GMP-AMP (cGAMP), a messenger produced by CGAS in response to DNA in the cytosol. Exhibits guanine base-specific ligand recognition: binds 3'-3'linked cGAMP, 2'-3' linked cGAMP and 3'-3' linked c-di-GMP with much greater affinity as compared to 3'-3' linked c-di-AMP. Following cGAMP-binding, promotes the formation of autophagosomes, leading to target cytosolic DNA for degradation by the lysosome. Promotes autophagy by acting as a proton channel that directs proton efflux from the Golgi to facilitate LC3 lipidation. Lacks the C-terminal tail (CTT) found in other vertebrate orthologs which is essential for interferon signaling. The sequence is that of Stimulator of interferon genes protein from Xenopus tropicalis (Western clawed frog).